Consider the following 1755-residue polypeptide: Deleted in lung and esophageal cancer protein 1 (1755 aa).

A compositionally biased stretch (basic residues) spans 1-12 (METRSSKTRRSL). 3 disordered regions span residues 1 to 39 (METR…PSQP), 1339 to 1360 (PGPS…GSSS), and 1529 to 1553 (SQDG…EETA). Positions 30–39 (PAGSSSPSQP) are enriched in low complexity.

Interacts with alpha- and beta-tubulin. Interacts with BBS2, BBS4, BBS5, MKKS, TCP1, CCT2, CCT3, CCT4, CCT5 and CCT7. As to expression, expressed in all tissues examined. Expression is highest in prostate and testis.

The protein localises to the cytoplasm. In terms of biological role, essential for spermatogenesis and male fertility. May play an important role in sperm head and tail formation. May act as a tumor suppressor by inhibiting cell proliferation. The sequence is that of Deleted in lung and esophageal cancer protein 1 from Homo sapiens (Human).